A 358-amino-acid polypeptide reads, in one-letter code: Insulin gene enhancer protein ISL-2A (358 aa).

LIM zinc-binding domains follow at residues 27–80 (CVGC…CKRD) and 89–143 (CANC…RADH). A DNA-binding region (homeobox) is located at residues 190-249 (TTRVRTVLNEKQLHTLRTCYNANPRPDALMKEQLVEMTGLSPRVIRVWFQNKRCKDKKRS). The segment covering 325-335 (ESGSMGNSSGS) has biased composition (low complexity). Positions 325-358 (ESGSMGNSSGSDVTSLSSQLPDTPNSMVASPVDT) are disordered. Over residues 336–358 (DVTSLSSQLPDTPNSMVASPVDT) the composition is skewed to polar residues.

The protein resides in the nucleus. Functionally, binds to one of the cis-acting domain of the insulin gene enhancer. May be involved in subtype specialization of primary motoneurons. The protein is Insulin gene enhancer protein ISL-2A (isl2a) of Oncorhynchus tshawytscha (Chinook salmon).